The following is a 158-amino-acid chain: Small ribosomal subunit protein uS7 (158 aa).

Belongs to the universal ribosomal protein uS7 family. Part of the 30S ribosomal subunit. Contacts proteins S9 and S11.

One of the primary rRNA binding proteins, it binds directly to 16S rRNA where it nucleates assembly of the head domain of the 30S subunit. Is located at the subunit interface close to the decoding center, probably blocks exit of the E-site tRNA. The chain is Small ribosomal subunit protein uS7 from Porphyromonas gingivalis (strain ATCC BAA-308 / W83).